The sequence spans 730 residues: Propionyl-CoA carboxylase alpha chain, mitochondrial (730 aa).

A mitochondrion-targeting transit peptide spans 1–52 (MAGLWVGGSVLVAAGRRGSRSPRPLMRSVALWTLKHVPQYSRQRLLVSRSLC). Positions 62–509 (TFDKILIANR…NTKFLSDVYP (448 aa)) constitute a Biotin carboxylation domain. Lys-65 bears the N6-acetyllysine; alternate mark. Lys-65 carries the N6-succinyllysine; alternate modification. At Lys-119 the chain carries N6-succinyllysine. Position 150 is an N6-acetyllysine; alternate (Lys-150). Lys-150 carries the post-translational modification N6-succinyllysine; alternate. An N6-acetyllysine modification is found at Lys-154. Lys-177 provides a ligand contact to ATP. The ATP-grasp domain occupies 181–378 (KLLAKKAKVN…LVQEMIRVAK (198 aa)). Position 188 is an N6-succinyllysine (Lys-188). At Lys-200 the chain carries N6-acetyllysine; alternate. Position 200 is an N6-succinyllysine; alternate (Lys-200). ATP contacts are provided by residues 209–270 (AREI…PRHI), Glu-261, and Asn-296. Phosphoserine is present on Ser-252. Lys-262 is subject to N6-succinyllysine. Positions 336, 349, and 351 each coordinate Mg(2+). Residues Glu-336, Glu-349, and Asn-351 each contribute to the Mn(2+) site. The active site involves Glu-349. Lys-407 is modified (N6-succinyllysine). Residue Phe-409 coordinates biotin. Lys-502, Lys-513, and Lys-650 each carry N6-succinyllysine. Residues 655-730 (KAAEDTSSIL…GEGDLLVELE (76 aa)) form the Biotinyl-binding domain. Lys-696 carries the N6-biotinyllysine modification.

In terms of assembly, the holoenzyme is a dodecamer composed of 6 PCCA/alpha subunits and 6 PCCB/beta subunits. Interacts (via the biotin carboxylation domain) with SIRT4. Interacts with SIRT3 and SIRT5. Mg(2+) serves as cofactor. It depends on Mn(2+) as a cofactor. Requires biotin as cofactor. In terms of processing, acetylated. The biotin cofactor is covalently attached to the C-terminal biotinyl-binding domain and is required for the catalytic activity. Biotinylation is catalyzed by HLCS.

It is found in the mitochondrion matrix. The enzyme catalyses propanoyl-CoA + hydrogencarbonate + ATP = (S)-methylmalonyl-CoA + ADP + phosphate + H(+). The catalysed reaction is butanoyl-CoA + hydrogencarbonate + ATP = (2S)-ethylmalonyl-CoA + ADP + phosphate + H(+). It functions in the pathway metabolic intermediate metabolism; propanoyl-CoA degradation; succinyl-CoA from propanoyl-CoA: step 1/3. This is one of the 2 subunits of the biotin-dependent propionyl-CoA carboxylase (PCC), a mitochondrial enzyme involved in the catabolism of odd chain fatty acids, branched-chain amino acids isoleucine, threonine, methionine, and valine and other metabolites. Propionyl-CoA carboxylase catalyzes the carboxylation of propionyl-CoA/propanoyl-CoA to D-methylmalonyl-CoA/(S)-methylmalonyl-CoA. Within the holoenzyme, the alpha subunit catalyzes the ATP-dependent carboxylation of the biotin carried by the biotin carboxyl carrier (BCC) domain, while the beta subunit then tranfers the carboxyl group from carboxylated biotin to propionyl-CoA. Propionyl-CoA carboxylase also significantly acts on butyryl-CoA/butanoyl-CoA, which is converted to ethylmalonyl-CoA/(2S)-ethylmalonyl-CoA at a much lower rate. Other alternative minor substrates include (2E)-butenoyl-CoA/crotonoyl-CoA. The polypeptide is Propionyl-CoA carboxylase alpha chain, mitochondrial (Sus scrofa (Pig)).